The chain runs to 314 residues: Deoxymugineic acid synthase 1-D (314 aa).

The interval 1–21 is disordered; the sequence is MGAGEKTAAGMPRIGMGTAVQ. Aspartate 44 is a binding site for NADP(+). Residue tyrosine 49 is the Proton donor of the active site. A substrate-binding site is contributed by histidine 112. NADP(+) contacts are provided by residues 158–159, glutamine 180, 258–266, and 273–281; these read AN, FDEARMREN, and ELTEEERLR.

It belongs to the aldo/keto reductase family. In terms of tissue distribution, mostly expressed in root tissues, observed, at low levels, in mesocotyl and embryonic roots, seedling roots, crown and seedling leafes, mature bracts, anthers, pistil, caryopsis and embryos.

It carries out the reaction 2'-deoxymugineate + NAD(+) = 3''-deamino-3''-oxonicotianamine + NADH + H(+). The catalysed reaction is 2'-deoxymugineate + NADP(+) = 3''-deamino-3''-oxonicotianamine + NADPH + H(+). The protein operates within siderophore biosynthesis. Catalyzes the reduction of a 3''-keto intermediate during the biosynthesis of 2'-deoxymugineic acid (DMA) from L-Met. Involved in the formation of phytosiderophores (MAs) belonging to the mugineic acid family and required to acquire iron. The polypeptide is Deoxymugineic acid synthase 1-D (Triticum aestivum (Wheat)).